The chain runs to 400 residues: Cytohesin-2 (400 aa).

Positions 10–63 (DLTPEERMELENIRRRKQELLVEIQRLREELSEAMSEVEGLEANEGSKTLQRNR) form a coiled coil. The SEC7 domain occupies 72–201 (FNMDPKKGIQ…VIMLNTSLHN (130 aa)). The 118-residue stretch at 259–376 (NPDREGWLLK…WIKSIQAAVS (118 aa)) folds into the PH domain. A 1,2-diacyl-sn-glycero-3-phospho-(1D-myo-inositol-3,4,5-trisphosphate)-binding positions include 268–276 (KLGGGRVKT), Arg-280, Tyr-291, Arg-301, Lys-339, Asn-350, and His-351. The interval 387–395 (RKKRISVKK) is C-terminal autoinhibitory region.

As to quaternary structure, heteromer. Composed of TAMALIN, CYTH2 and at least one GRM1. Interacts with ARRB1. Interacts with ARL4D; the interaction is direct. Directly interacts with CCDC120 through the coiled coil domain; this interaction stabilizes CCDC120, possibly by preventing its ubiquitination, and is required for neurite growth in neuroblastoma cells. Interacts with ARF1. Interacts with FRMD4A. Interacts (via N-terminal domain) with INAVA (via N-terminal domain). As to expression, widely expressed.

The protein resides in the cell membrane. The protein localises to the cytoplasm. It localises to the cell projection. Its subcellular location is the growth cone. It is found in the cell junction. The protein resides in the tight junction. The protein localises to the adherens junction. In terms of biological role, acts as a guanine-nucleotide exchange factor (GEF). Promotes guanine-nucleotide exchange on ARF1, ARF3 and ARF6. Activates ARF factors through replacement of GDP with GTP. The cell membrane form, in association with ARL4 proteins, recruits ARF6 to the plasma membrane. Involved in neurite growth. The protein is Cytohesin-2 of Homo sapiens (Human).